A 374-amino-acid chain; its full sequence is Pectate lyase 3 (374 aa).

The N-terminal stretch at 1 to 22 is a signal peptide; the sequence is MKYLLPSAAAGLLLLAAQPTMA. Cysteines 93 and 176 form a disulfide. 4 residues coordinate Ca(2+): D150, D152, E187, and D191. The active site involves R239. C350 and C373 are joined by a disulfide.

Belongs to the polysaccharide lyase 1 family. PLADES subfamily. It depends on Ca(2+) as a cofactor.

It localises to the secreted. The catalysed reaction is Eliminative cleavage of (1-&gt;4)-alpha-D-galacturonan to give oligosaccharides with 4-deoxy-alpha-D-galact-4-enuronosyl groups at their non-reducing ends.. Its pathway is glycan metabolism; pectin degradation; 2-dehydro-3-deoxy-D-gluconate from pectin: step 2/5. Functionally, involved in maceration and soft-rotting of plant tissue. This chain is Pectate lyase 3 (pel3), found in Pectobacterium carotovorum subsp. carotovorum (Erwinia carotovora subsp. carotovora).